The primary structure comprises 1703 residues: Arf-GAP with Rho-GAP domain, ANK repeat and PH domain-containing protein 2 (1703 aa).

Residues 6 to 70 (EVNADIRDFL…LKQLQMIFSK (65 aa)) form the SAM domain. Y77 carries the post-translational modification Phosphotyrosine. Disordered stretches follow at residues 84-132 (KNGS…LSEG), 191-232 (EEHT…NGTN), and 286-319 (PVPE…LTLK). Composition is skewed to polar residues over residues 85-103 (NGST…STHT), 123-132 (MVTTSTLSEG), and 197-214 (GNLT…NTEC). Residues 222-232 (TSGTHSGNGTN) are compositionally biased toward low complexity. Positions 308–319 (NTTSAGKSLTLK) are enriched in polar residues. 2 consecutive PH domains span residues 480-572 (AKEK…SALK) and 585-677 (APEK…QSIA). One can recognise an Arf-GAP domain in the interval 674–809 (QSIAETLSDY…TLLASLTKEE (136 aa)). A C4-type zinc finger spans residues 698 to 721 (CADCKAPDPDWASINLCVVICKKC). PH domains are found at residues 899 to 1001 (QTAA…KRFV) and 1012 to 1110 (DYDL…KAAG). Residues 1114–1295 (NALQDQQLCK…DLINNYVEIF (182 aa)) form the Rho-GAP domain. In terms of domain architecture, Ras-associating spans 1324 to 1418 (GDLLIEVFVE…AYLVVKRFLT (95 aa)). In terms of domain architecture, PH 5 spans 1428-1531 (KSIKEGILKL…WMASIFIAQH (104 aa)). Phosphoserine is present on S1627. Disordered regions lie at residues 1633 to 1670 (DTEA…DPKL) and 1684 to 1703 (RSRP…KEVK). Composition is skewed to basic and acidic residues over residues 1653–1670 (KKTE…DPKL) and 1688–1703 (LHKE…KEVK).

Its subcellular location is the cytoplasm. Phosphatidylinositol 3,4,5-trisphosphate-dependent GTPase-activating protein that modulates actin cytoskeleton remodeling by regulating ARF and RHO family members. Is activated by phosphatidylinositol 3,4,5-trisphosphate (PtdIns(3,4,5)P3) binding. Can be activated by phosphatidylinositol 3,4-bisphosphate (PtdIns(3,4,5)P2) binding, albeit with lower efficiency. The sequence is that of Arf-GAP with Rho-GAP domain, ANK repeat and PH domain-containing protein 2 (Arap2) from Mus musculus (Mouse).